The chain runs to 147 residues: MKPLNLVLGLCILVGCFLSCECHRGPRRHDPRGPFPPPPPPHGPGIGRPHPPPFGPGIGRPPPPPFGPGIGRPPPPPPCPPVPPHPRPPSNPSPPPTPSIPPTGPPTTVQATTMPAASISITTPTARDSTDIFWRLWELINSLLQQE.

The N-terminal stretch at 1–22 (MKPLNLVLGLCILVGCFLSCEC) is a signal peptide. Positions 27–128 (RRHDPRGPFP…ISITTPTARD (102 aa)) are disordered. Residues 33-105 (GPFPPPPPPH…PTPSIPPTGP (73 aa)) are compositionally biased toward pro residues. A run of 3 repeats spans residues 43–54 (GPGIGRPHPPPF), 55–66 (GPGIGRPPPPPF), and 67–78 (GPGIGRPPPPPP). Residues 43–78 (GPGIGRPHPPPFGPGIGRPPPPPFGPGIGRPPPPPP) are 3 X 12 AA tandem repeats of G-P-G-I-G-R-P-[HP]-P-P-P-[PF]. The span at 108-127 (TVQATTMPAASISITTPTAR) shows a compositional bias: polar residues.

This sequence belongs to the PROL1/PROL3 family. As to expression, secreted into saliva by submaxillary gland.

The protein localises to the secreted. In terms of biological role, may play a role in protection or detoxification. This chain is Submaxillary gland androgen-regulated protein 3A (Smr3a), found in Mus musculus (Mouse).